The chain runs to 635 residues: Rab11 family-interacting protein 4 (635 aa).

The 36-residue stretch at 49–84 (GQGEEVEKLVKCLDPNDLGRINFKDFCRGVFAMKGC) folds into the EF-hand domain. Ca(2+)-binding residues include aspartate 62, asparagine 64, arginine 68, and aspartate 73. A necessary for interaction with RAB11A, subcellular location, homo- or heterooligomerization region spans residues 82 to 635 (KGCEELLKDV…HNPSILEIKH (554 aa)). Disordered stretches follow at residues 147–176 (GPQE…EKEP) and 216–258 (EDYG…QTPR). A compositionally biased stretch (acidic residues) spans 216-225 (EDYGEGDDVD). Residues 279 to 615 (KINLLNDLEA…EEINFRLRQY (337 aa)) adopt a coiled-coil conformation. Positions 572-634 (EAKNLFATQT…DHNPSILEIK (63 aa)) constitute an FIP-RBD domain.

In terms of assembly, homodimer. Forms a complex with Rab11 (RAB11A or RAB11B) and ARF6. Interacts with RAB11A; the interaction is direct. Forms a heterooligomeric complex with RAB11FIP2, RAB11FIP3 and RAB11FIP5. Interacts with ECPAS. In terms of tissue distribution, strongly expressed in the developing retina. Expressed predominantly in neural tissues.

The protein localises to the recycling endosome membrane. It localises to the cleavage furrow. Its subcellular location is the midbody. It is found in the cytoplasmic vesicle. Functionally, acts as a regulator of endocytic traffic by participating in membrane delivery. Required for the abscission step in cytokinesis, possibly by acting as an 'address tag' delivering recycling endosome membranes to the cleavage furrow during late cytokinesis. May play a role in differentiation during retinal development, in a Rab11-independent manner. This Mus musculus (Mouse) protein is Rab11 family-interacting protein 4 (Rab11fip4).